Consider the following 467-residue polypeptide: ATP synthase subunit beta (467 aa).

Residue 156-163 (GGAGVGKT) participates in ATP binding.

Belongs to the ATPase alpha/beta chains family. As to quaternary structure, F-type ATPases have 2 components, CF(1) - the catalytic core - and CF(0) - the membrane proton channel. CF(1) has five subunits: alpha(3), beta(3), gamma(1), delta(1), epsilon(1). CF(0) has three main subunits: a(1), b(2) and c(9-12). The alpha and beta chains form an alternating ring which encloses part of the gamma chain. CF(1) is attached to CF(0) by a central stalk formed by the gamma and epsilon chains, while a peripheral stalk is formed by the delta and b chains.

It is found in the cell inner membrane. The enzyme catalyses ATP + H2O + 4 H(+)(in) = ADP + phosphate + 5 H(+)(out). Its function is as follows. Produces ATP from ADP in the presence of a proton gradient across the membrane. The catalytic sites are hosted primarily by the beta subunits. The chain is ATP synthase subunit beta from Ralstonia nicotianae (strain ATCC BAA-1114 / GMI1000) (Ralstonia solanacearum).